Reading from the N-terminus, the 258-residue chain is Small ribosomal subunit protein uS2 (258 aa).

Residues 226–258 form a disordered region; sequence KQGQDDEETLEVDFKENADGSEEIVSAEENPED. The span at 244 to 258 shows a compositional bias: acidic residues; it reads DGSEEIVSAEENPED.

The protein belongs to the universal ribosomal protein uS2 family.

The chain is Small ribosomal subunit protein uS2 from Lactobacillus acidophilus (strain ATCC 700396 / NCK56 / N2 / NCFM).